Here is a 291-residue protein sequence, read N- to C-terminus: Lipoyl synthase (291 aa).

Positions 35, 40, 46, 61, 65, 68, and 273 each coordinate [4Fe-4S] cluster. Positions 47-262 (FGKRQATFLI…KERALTMGFE (216 aa)) constitute a Radical SAM core domain.

It belongs to the radical SAM superfamily. Lipoyl synthase family. [4Fe-4S] cluster serves as cofactor.

It is found in the cytoplasm. It catalyses the reaction [[Fe-S] cluster scaffold protein carrying a second [4Fe-4S](2+) cluster] + N(6)-octanoyl-L-lysyl-[protein] + 2 oxidized [2Fe-2S]-[ferredoxin] + 2 S-adenosyl-L-methionine + 4 H(+) = [[Fe-S] cluster scaffold protein] + N(6)-[(R)-dihydrolipoyl]-L-lysyl-[protein] + 4 Fe(3+) + 2 hydrogen sulfide + 2 5'-deoxyadenosine + 2 L-methionine + 2 reduced [2Fe-2S]-[ferredoxin]. It participates in protein modification; protein lipoylation via endogenous pathway; protein N(6)-(lipoyl)lysine from octanoyl-[acyl-carrier-protein]: step 2/2. Catalyzes the radical-mediated insertion of two sulfur atoms into the C-6 and C-8 positions of the octanoyl moiety bound to the lipoyl domains of lipoate-dependent enzymes, thereby converting the octanoylated domains into lipoylated derivatives. The chain is Lipoyl synthase from Citrifermentans bemidjiense (strain ATCC BAA-1014 / DSM 16622 / JCM 12645 / Bem) (Geobacter bemidjiensis).